We begin with the raw amino-acid sequence, 386 residues long: Acyl-CoA ligase lcsD (386 aa).

The interval 62–132 (ELEQTLLAIQ…ELLPACKIIQ (71 aa)) is SBD1. 107–115 (AVGASGISK) contributes to the ATP binding site. Residues 133-195 (GYGMTETTGV…LRSPSVVIGY (63 aa)) are SBD2. Position 137 (threonine 137) interacts with substrate. ATP is bound by residues aspartate 216 and arginine 235. CoA contacts are provided by residues 243–245 (RGL) and 313–316 (HLDG). Lysine 331 is an ATP binding site. The interval 352–386 (REKAANGVHKVHVNGVKRPEKMEVFDLSSDDEDDD) is disordered.

Belongs to the ATP-dependent AMP-binding enzyme family.

Its pathway is secondary metabolite biosynthesis. In terms of biological role, acyl-CoA ligase; part of the gene cluster that mediates the biosynthesis of the lipopeptide antibiotics leucinostatins that show extensive biological activities, including antimalarial, antiviral, antibacterial, antifungal, and antitumor activities, as well as phytotoxic. Leucinostatin A contains nine amino acid residues, including the unusual amino acid 4-methyl-L-proline (MePro), 2-amino-6-hydroxy-4-methyl-8-oxodecanoic acid (AHyMeOA), 3-hydroxyleucine (HyLeu), alpha-aminoisobutyric acid (AIB), beta-Ala, a 4-methylhex-2-enoic acid at the N-terminus as well as a N1,N1-dimethylpropane-1,2-diamine (DPD) at the C-terminus. The biosynthesis of leucinostatins is probably initiated with the assembly of 4-methylhex-2-enoic acid by a reducing PKS. Two reducing polyketide synthases, lcsB and lcsC, have been identified in the cluster and it is not clear which is the one that assembles 4-methylhex-2-enoic acid since both contain KS, AT, DH, cMT, ER, KR and ACP domains. The polyketide residue might be transferred to the NRPS lcsA, mediated by two additional enzymes, the acyl-CoA ligase lcsD and the thioesterase lcsE. The linear polyketide carboxylic acid, which is released from PKS, is converted to a CoA thioester by lcsD, and then lcsE hydrolyzes the thiol bond and shuttles the polyketide intermediate to lcsA. The C domain of the first module catalyzed the condensation of 4-methylhex-2-enoic acid and MePro carried by domain A1, followed by successive condensations of nine amino acids to trigger the elongation of the linear peptide. A5 and A6 domains of lcsA are proposed to incorporate leucine, A2 AHyMeOA, and A3 incorporates HyLeu. A4, A7 and A8 incorporate AIB. The AHyMeOA in leucinostatin A activated by the A2 might be produced by the second PKS (lcsB or lcsC) present within the cluster. The MePro is probably produced via leucine cyclization and may originate from a separate pathway, independent of the cluster. Another nonproteinogenic amino acid, beta-Ala, could be produced by an aspartic acid decarboxylase also localized outside of the cluster. Two candidates are VFPBJ_01400 and VFPBJ_10476. The final peptide scaffold may be released by the NAD(P)H-dependent thioester reductase (TE) at the C-terminal region of lcsA. Transamination of the lcsA product by the transaminase lcsP may produce DPD at the C-terminus. Further hydroxylation steps performed alternatively by the cytochrome P450 monooxygenases lcsI, lcsK and lcsN then yield the non-methylated leucinostatins precursor. It is also possible that leucines can be hydroxylated prior to their incorporation into the peptide. Varying extents of methylation then lead to the formation of leucinostatins A and B. This chain is Acyl-CoA ligase lcsD, found in Purpureocillium lilacinum (Paecilomyces lilacinus).